The following is a 418-amino-acid chain: Phosphoglycerate kinase (418 aa).

Positions 24, 25, 26, 27, 40, 63, 64, 66, 67, 122, 123, 169, and 170 each coordinate (2R)-3-phosphoglycerate. Gly213 serves as a coordination point for ADP. Gly213 serves as a coordination point for CDP. AMP-binding residues include Ala214 and Lys215. Ala214 serves as a coordination point for ATP. Ala214 serves as a coordination point for Mg(2+). Residues Ala217 and Asp218 each coordinate Mg(2+). Residue Asp218 coordinates CDP. Residue Lys219 participates in AMP binding. Lys219 contacts ATP. Gly237 is an ADP binding site. Residue Gly237 coordinates CDP. 2 residues coordinate AMP: Gly238 and Gly312. Residues Gly238 and Gly312 each coordinate ATP. CDP is bound by residues Gly337 and Phe342. Position 342 (Phe342) interacts with ADP. Glu343 serves as a coordination point for AMP. Residues Glu343, Asp374, and Thr375 each contribute to the ATP site. A Mg(2+)-binding site is contributed by Asp374.

This sequence belongs to the phosphoglycerate kinase family. As to quaternary structure, monomer. It depends on Mg(2+) as a cofactor.

It catalyses the reaction (2R)-3-phosphoglycerate + ATP = (2R)-3-phospho-glyceroyl phosphate + ADP. It functions in the pathway carbohydrate degradation; glycolysis; pyruvate from D-glyceraldehyde 3-phosphate: step 2/5. The polypeptide is Phosphoglycerate kinase (PGK) (Euplotes crassus).